The sequence spans 269 residues: Integral membrane protein 2C (269 aa).

A Phosphothreonine modification is found at Thr-39. The chain crosses the membrane as a helical; Signal-anchor for type II membrane protein span at residues 57 to 77 (VGGVCYLSMGMVVLLMGLVFA). Residues 138 to 232 (FGGGDPADII…LCNGKDTYRL (95 aa)) form the BRICHOS domain. Cys-165 and Cys-224 form a disulfide bridge. Asn-171 is a glycosylation site (N-linked (GlcNAc...) asparagine).

It belongs to the ITM2 family. In terms of assembly, interacts with BACE1. Interacts with APP. Interacts with STMN2. Type I membrane-bound, as well as soluble, furin has a pre-eminent role in ITM2C proteolytic processing. PCSK7 and PCSK5 may also be involved although to a lesser extent. The soluble form of PCSK7 is incapable of processing ITM2C. Fails to undergo shedding by ADAM10 and intramembrane cleavage by SPPL2B.

It localises to the lysosome membrane. Its subcellular location is the cell membrane. In terms of biological role, negative regulator of amyloid-beta peptide production. May inhibit the processing of APP by blocking its access to alpha- and beta-secretase. Binding to the beta-secretase-cleaved APP C-terminal fragment is negligible, suggesting that ITM2C is a poor gamma-secretase cleavage inhibitor. May play a role in TNF-induced cell death and neuronal differentiation. This chain is Integral membrane protein 2C (ITM2C), found in Sus scrofa (Pig).